Reading from the N-terminus, the 145-residue chain is MRQTFMANESNIDRKWYVIDAEGKTMGRLSSEVASILRGKHKPTFTPHVDCGDHVILINAEKIYLSGNKAEDKIYYRHSNHPGGIKSISAGELREKNPVRLMETSIKGMLPKGSLGDKMFKKLHVYAGAEHPHTAQQPENYELRG.

The protein belongs to the universal ribosomal protein uL13 family. As to quaternary structure, part of the 50S ribosomal subunit.

Functionally, this protein is one of the early assembly proteins of the 50S ribosomal subunit, although it is not seen to bind rRNA by itself. It is important during the early stages of 50S assembly. This Macrococcus caseolyticus (strain JCSC5402) (Macrococcoides caseolyticum) protein is Large ribosomal subunit protein uL13.